The sequence spans 95 residues: MLKKGKKTGSNSSGGTAYSPLAYLKRPYFRRSKACPLEQCANEDIDYKNKALLSKFTSEYGRILPSRITSVSSRKQRLLSTAIKRARYLALLPYC.

It belongs to the bacterial ribosomal protein bS18 family. In terms of assembly, part of the 30S ribosomal subunit. Forms a tight heterodimer with protein bS6.

Functionally, binds as a heterodimer with protein bS6 to the central domain of the 16S rRNA, where it helps stabilize the platform of the 30S subunit. This chain is Small ribosomal subunit protein bS18, found in Ehrlichia ruminantium (strain Gardel).